Reading from the N-terminus, the 593-residue chain is Translation initiation factor rli1 (593 aa).

4Fe-4S ferredoxin-type domains follow at residues 7–39 and 46–75; these read RIAI…KLCI and RIAF…IINL. ABC transporter domains follow at residues 70–318 and 334–556; these read INII…FLDG and FRLA…LKNL. ATP contacts are provided by residues 110–117 and 382–389; these read GTNGIGKS and GENGTGKT.

Belongs to the ABC transporter superfamily. As to quaternary structure, component of the multifactor complex (MFC). The complex associates with pre-initiation complexes.

The protein resides in the cytoplasm. The protein localises to the nucleus. In terms of biological role, component of the multifactor complex (MFC) involved in translation initiation. Required for the binding of MFC to the 40S ribosome. Required for the processing and nuclear export of the 60S and 40S ribosomal subunits. The chain is Translation initiation factor rli1 (rli1) from Schizosaccharomyces pombe (strain 972 / ATCC 24843) (Fission yeast).